Reading from the N-terminus, the 297-residue chain is uncharacterized protein (297 aa).

This is an uncharacterized protein from Bacillus subtilis (strain 168).